Here is a 186-residue protein sequence, read N- to C-terminus: Dirigent protein 7 (186 aa).

Positions 1–21 (MAKLILIIVTQILLIAAVVSA) are cleaved as a signal peptide. N-linked (GlcNAc...) asparagine glycosylation is found at Asn-70, Asn-91, and Asn-126.

It belongs to the plant dirigent protein family. Homodimer.

The protein resides in the secreted. It is found in the extracellular space. It localises to the apoplast. In terms of biological role, dirigent proteins impart stereoselectivity on the phenoxy radical-coupling reaction, yielding optically active lignans from two molecules of coniferyl alcohol in the biosynthesis of lignans, flavonolignans, and alkaloids and thus plays a central role in plant secondary metabolism. The chain is Dirigent protein 7 (DIR7) from Arabidopsis thaliana (Mouse-ear cress).